Consider the following 878-residue polypeptide: DNA gyrase subunit A (878 aa).

Residues 34–533 form the Topo IIA-type catalytic domain; sequence LPDVRDGLKP…NSADINIEDL (500 aa). Tyr122 functions as the O-(5'-phospho-DNA)-tyrosine intermediate in the catalytic mechanism. A GyrA-box motif is present at residues 560 to 566; it reads QRRGGKG. The segment at 844–878 is disordered; that stretch reads DDEELDAIDGSVAEGDEDIAPEAESDDDVADDADE. The segment covering 857 to 878 has biased composition (acidic residues); the sequence is EGDEDIAPEAESDDDVADDADE.

It belongs to the type II topoisomerase GyrA/ParC subunit family. Heterotetramer, composed of two GyrA and two GyrB chains. In the heterotetramer, GyrA contains the active site tyrosine that forms a transient covalent intermediate with DNA, while GyrB binds cofactors and catalyzes ATP hydrolysis.

It localises to the cytoplasm. It carries out the reaction ATP-dependent breakage, passage and rejoining of double-stranded DNA.. In terms of biological role, a type II topoisomerase that negatively supercoils closed circular double-stranded (ds) DNA in an ATP-dependent manner to modulate DNA topology and maintain chromosomes in an underwound state, and also catalyzes the interconversion of other topological isomers of double-stranded DNA rings, including catenanes and knotted rings. Replenishes negative supercoiling downstream of highly transcribed genes to help control overall chromosomal supercoiling density. E.coli makes 15% more negative supercoils in pBR322 plasmid DNA than S.typhimurium; the S.typhimurium GyrB subunit is toxic in E.coli, while the E.coli copy can be expressed in S.typhimurium even though the 2 subunits have 777/804 residues identical. Functionally, negative supercoiling favors strand separation, and DNA replication, transcription, recombination and repair, all of which involve strand separation. Type II topoisomerases break and join 2 DNA strands simultaneously in an ATP-dependent manner. This is DNA gyrase subunit A from Salmonella typhimurium (strain LT2 / SGSC1412 / ATCC 700720).